A 294-amino-acid polypeptide reads, in one-letter code: Proteasome subunit beta 1 (294 aa).

Positions methionine 1–glycine 65 are cleaved as a propeptide — removed in mature form; by autocatalysis. Threonine 66 (nucleophile) is an active-site residue.

Belongs to the peptidase T1B family. The 20S proteasome core is composed of 14 alpha and 14 beta subunits that assemble into four stacked heptameric rings, resulting in a barrel-shaped structure. The two inner rings, each composed of seven catalytic beta subunits, are sandwiched by two outer rings, each composed of seven alpha subunits. All four combinations of alpha- and beta-subunits (beta2-alpha1, beta2-alpha2, beta1-alpha2 and beta1-alpha1) yield fully assembled and proteolytically active proteasomes. The catalytic chamber with the active sites is on the inside of the barrel. Has probably a gated structure, the ends of the cylinder being occluded by the N-termini of the alpha-subunits. Is likely capped by the proteasome-associated ATPase, ARC.

The protein localises to the cytoplasm. The enzyme catalyses Cleavage of peptide bonds with very broad specificity.. The protein operates within protein degradation; proteasomal Pup-dependent pathway. The formation of the proteasomal ATPase ARC-20S proteasome complex, likely via the docking of the C-termini of ARC into the intersubunit pockets in the alpha-rings, may trigger opening of the gate for substrate entry. Interconversion between the open-gate and close-gate conformations leads to a dynamic regulation of the 20S proteasome proteolysis activity. Functionally, component of the proteasome core, a large protease complex with broad specificity involved in protein degradation. The R.erythropolis proteasomes are able to cleave oligopeptides after Tyr, Phe and Leu, very poorly after Arg but not after Glu. Thus, displays chymotrypsin-like activity, low trypsin-like activity but no caspase-like activity. The sequence is that of Proteasome subunit beta 1 from Rhodococcus erythropolis (Arthrobacter picolinophilus).